The sequence spans 440 residues: KH domain-containing protein 3 (440 aa).

The segment at Met1–Glu39 is involved in RNA binding. The KH; atypical domain maps to Asp40–Ala118. Residues Lys132–Ala201 form a disordered region. Ser151 bears the Phosphoserine; by ATR mark. Phosphothreonine occurs at positions 274 and 286. Residues Val341–Leu440 form a required for interaction with NUMA1 and regulation of apoptosis in response to DNA damage region. Residue Ser349 is modified to Phosphoserine.

Belongs to the KHDC1 family. As to quaternary structure, component of the subcortical maternal complex (SCMC), at least composed of NLRP5, KHDC3, OOEP, and TLE6. Within the complex, interacts with NLRP5, OOEP and TLE6. The SCMC may facilitate translocation of its components between the nuclear and cytoplasmic compartments. Forms a scaffold complex with OOEP/FLOPED, and interacts with BLM and TRIM25 at DNA replication forks. Interacts with PARP1; the interaction is increased following the formation of DNA double-strand breaks. Interacts (via C-terminus) with NUMA1. Phosphorylation at Ser-151 is required to promote stalled fork restart. Detected in ovary, but not in testis or somatic tissues. In the ovary, expressed in growing oocytes.

The protein resides in the cytoplasm. The protein localises to the cell cortex. It localises to the nucleus. It is found in the mitochondrion. Its subcellular location is the cytoskeleton. The protein resides in the microtubule organizing center. The protein localises to the centrosome. It localises to the chromosome. Its function is as follows. Component of the subcortical maternal complex (SCMC), a multiprotein complex that plays a key role in early embryonic development. The SCMC complex is a structural constituent of cytoplasmic lattices, which consist in fibrous structures found in the cytoplasm of oocytes and preimplantation embryos. They are required to store maternal proteins critical for embryonic development, such as proteins that control epigenetic reprogramming of the preimplantation embryo, and prevent their degradation or activation. KHDC3 ensures proper spindle assembly by regulating the localization of AURKA via RHOA signaling and of PLK1 via a RHOA-independent process. Required for the localization of MAD2L1 to kinetochores to enable spindle assembly checkpoint function. As part of the OOEP-KHDC3 scaffold, recruits BLM and TRIM25 to DNA replication forks, thereby promoting the ubiquitination of BLM by TRIM25, enhancing BLM retainment at replication forks and therefore promoting stalled replication fork restart. Regulates homologous recombination-mediated DNA repair via recruitment of RAD51 to sites of DNA double-strand breaks, and sustainment of PARP1 activity, which in turn modulates downstream ATM or ATR activation. Activation of ATM or ATR in response to DNA double-strand breaks may be cell-type specific. Its role in DNA double-strand break repair is independent of its role in restarting stalled replication forks. Promotes neural stem cell neurogenesis and neuronal differentiation in the hippocampus. May regulate normal development of learning, memory and anxiety. Capable of binding RNA. This Mus musculus (Mouse) protein is KH domain-containing protein 3.